The chain runs to 407 residues: Peptidase T (407 aa).

His82 contributes to the Zn(2+) binding site. The active site involves Asp84. Zn(2+) is bound at residue Asp143. Glu177 functions as the Proton acceptor in the catalytic mechanism. The Zn(2+) site is built by Glu178, Asp200, and His382.

It belongs to the peptidase M20B family. It depends on Zn(2+) as a cofactor.

It localises to the cytoplasm. It carries out the reaction Release of the N-terminal residue from a tripeptide.. Its function is as follows. Cleaves the N-terminal amino acid of tripeptides. The protein is Peptidase T of Streptococcus pyogenes serotype M2 (strain MGAS10270).